We begin with the raw amino-acid sequence, 513 residues long: ATP synthase subunit alpha (513 aa).

Position 169–176 (169–176) interacts with ATP; it reads GDRQTGKT.

Belongs to the ATPase alpha/beta chains family. As to quaternary structure, F-type ATPases have 2 components, CF(1) - the catalytic core - and CF(0) - the membrane proton channel. CF(1) has five subunits: alpha(3), beta(3), gamma(1), delta(1), epsilon(1). CF(0) has three main subunits: a(1), b(2) and c(9-12). The alpha and beta chains form an alternating ring which encloses part of the gamma chain. CF(1) is attached to CF(0) by a central stalk formed by the gamma and epsilon chains, while a peripheral stalk is formed by the delta and b chains.

Its subcellular location is the cell inner membrane. The catalysed reaction is ATP + H2O + 4 H(+)(in) = ADP + phosphate + 5 H(+)(out). In terms of biological role, produces ATP from ADP in the presence of a proton gradient across the membrane. The alpha chain is a regulatory subunit. This is ATP synthase subunit alpha from Halorhodospira halophila (strain DSM 244 / SL1) (Ectothiorhodospira halophila (strain DSM 244 / SL1)).